Consider the following 1170-residue polypeptide: Thrombospondin-1 (1170 aa).

A signal peptide spans 1 to 18 (MGLAWGLGVLFLMHVCGT). The segment at 47-95 (RLVKGPDPSSPAFRIEDANLIPPVPDDKFQDLVDAVRAEKGFLLLASLR) is heparin-binding. A Laminin G-like domain is found at 65–270 (NLIPPVPDDK…HKTKDLQAIC (206 aa)). A disulfide bridge links Cys-171 with Cys-232. Residues Asn-248 and Asn-360 are each glycosylated (N-linked (GlcNAc...) asparagine). Residues 316-373 (PLCYHNGVQYRNNEEWTVDSCTECHCQNSVTICKKVSCPIMPCSNATVPDGECCPRCW) form the VWFC domain. 3 consecutive TSP type-1 domains span residues 379–429 (DDGW…QECD), 435–490 (DGGW…DACP), and 492–547 (NGGW…QDCP). Trp-385 carries C-linked (Man) tryptophan glycosylation. 3 disulfides stabilise this stretch: Cys-391/Cys-423, Cys-395/Cys-428, and Cys-406/Cys-413. O-linked (Fuc...) serine glycosylation occurs at Ser-394. 2 C-linked (Man) tryptophan glycosylation sites follow: Trp-438 and Trp-441. 3 disulfide bridges follow: Cys-447–Cys-484, Cys-451–Cys-489, and Cys-462–Cys-474. O-linked (Fuc...) threonine glycosylation is present at Thr-450. C-linked (Man) tryptophan glycosylation is present at Trp-498. 21 disulfides stabilise this stretch: Cys-504–Cys-541, Cys-508–Cys-546, Cys-519–Cys-531, Cys-551–Cys-562, Cys-556–Cys-572, Cys-575–Cys-586, Cys-592–Cys-608, Cys-599–Cys-617, Cys-620–Cys-644, Cys-650–Cys-663, Cys-657–Cys-676, Cys-678–Cys-689, Cys-705–Cys-713, Cys-718–Cys-738, Cys-754–Cys-774, Cys-777–Cys-797, Cys-813–Cys-833, Cys-836–Cys-856, Cys-874–Cys-894, Cys-910–Cys-930, and Cys-946–Cys-1167. O-linked (Fuc...) threonine glycosylation occurs at Thr-507. Residues 531 to 1152 (CVGDVTENQI…YAGGRLGLFV (622 aa)) are involved in retention in extracellular matrix (ECM); involved in trimer formation. The EGF-like 1 domain maps to 547-587 (PIDGCLSNPCFAGVKCTSYPDGSWKCGACPPGYSGNGIQCT). Ser-553 is a glycosylation site (O-linked (Xyl) serine). Residues 646-690 (PRNPCTDGTHDCNKNAKCNYLGHYSDPMYRCECKPGYAGNGIICG) form the EGF-like 2 domain. 8 TSP type-3 repeats span residues 691–726 (EDTD…NSGQ), 727–762 (EDYD…NPAQ), 763–785 (YDYD…NPDQ), 786–821 (ADTD…NVDQ), 822–844 (RDTD…NPDQ), 845–882 (LDSD…NANQ), 883–918 (ADHD…NPDQ), and 919–954 (KDSD…DISE). Asn-708 is a glycosylation site (N-linked (GlcNAc...) asparagine). The disordered stretch occupies residues 839 to 934 (EHNPDQLDSD…GRGDACKDDF (96 aa)). Composition is skewed to basic and acidic residues over residues 840–854 (HNPD…RIGD), 883–894 (ADHDKDGKGDAC), and 917–934 (DQKD…KDDF). A Cell attachment site motif is present at residues 926–928 (RGD). In terms of domain architecture, TSP C-terminal spans 958–1170 (RRFQMIPLDP…SDLKYECRDP (213 aa)). A glycan (N-linked (GlcNAc...) asparagine) is linked at Asn-1067.

It belongs to the thrombospondin family. In terms of assembly, homotrimer; disulfide-linked. Can bind to fibrinogen, fibronectin, laminin, type V collagen and integrins alpha-V/beta-1, alpha-V/beta-3 and alpha-IIb/beta-3. Binds heparin. Interacts (via the C-terminal domain) with CD47. Interacts (via the TSP type I repeats) with CD36; the interaction conveys an antiangiogenic effect. Interacts (via the TSP type I repeats) with HRG; the interaction blocks the antiangiogenic effect of THBS1 with CD36. Interacts with ATF6 (via lumenal domain). Interacts with FN1; this interaction is enhanced by TNFAIP6, which may act as a bridging molecule between FN1 and THBS1. Interacts with SIRPA; the interaction stimulates phosphorylation of SIRPA. Expressed by platelets (at protein level). Expressed by monocyte-derived immature and mature dendritic cells (at protein level).

The protein localises to the secreted. The protein resides in the cell surface. It is found in the extracellular space. Its subcellular location is the extracellular matrix. It localises to the endoplasmic reticulum. The protein localises to the sarcoplasmic reticulum. Its function is as follows. Adhesive glycoprotein that mediates cell-to-cell and cell-to-matrix interactions. Multifunctional, involved in inflammation, angiogenesis, wound healing, reactive oxygen species (ROS) signaling, nitrous oxide (NO) signaling, apoptosis, senescence, aging, cellular self-renewal, stemness, and cardiovascular and metabolic homeostasis. Negatively modulates dendritic cell activation and cytokine release, as part of an autocrine feedback loop, contributing to the resolution of inflammation and immune homeostasis. Ligand for receptor CD47. Modulates nitrous oxide (NO) signaling via CD47, hence playing a role as a pressor agent, supporting blood pressure. Plays a role in endothelial cell senescence, acting via CD47, by increasing the abundance and activation of NADPH oxidase NOX1, and so generating excess ROS. Inhibits stem cell self-renewal, acting via CD47 signaling, probably by regulation of the stem cell transcription factors POU5F1/OCT4, SOX2, MYC/c-Myc and KLF4. Negatively modulates wound healing, acting via CD47. Ligand for receptor CD36. Involved in inducing apoptosis in podocytes in response to elevated free fatty acids, acting via CD36. Plays a role in suppressing angiogenesis, acting, depending on context, via CD36 or CD47. Promotes cellular senescence in a TP53-CDKN1A-RB1 signaling-dependent manner. Ligand for immunoglobulin-like cell surface receptor SIRPA. Involved in ROS signaling in non-phagocytic cells, stimulating NADPH oxidase-derived ROS production, acting via interaction with SIRPA. Plays a role in metabolic dysfunction in diet-induced obesity, perhaps acting by exacerbating adipose inflammatory activity; its effects may be mediated, at least in part, through enhanced adipocyte proliferation. Plays a role in ER stress response, via its interaction with the activating transcription factor 6 alpha (ATF6) which produces adaptive ER stress response factors. May be involved in age-related conditions, including metabolic dysregulation, during normal aging. The protein is Thrombospondin-1 of Homo sapiens (Human).